We begin with the raw amino-acid sequence, 378 residues long: Pyrimidine monooxygenase RutA (378 aa).

FMN is bound by residues 65–66 (IK), Asn131, Glu140, 156–157 (RY), and Ser206.

Belongs to the NtaA/SnaA/DszA monooxygenase family. RutA subfamily.

The catalysed reaction is uracil + FMNH2 + NADH + O2 = (Z)-3-ureidoacrylate + FMN + NAD(+) + H2O + H(+). The enzyme catalyses thymine + FMNH2 + NADH + O2 = (Z)-2-methylureidoacrylate + FMN + NAD(+) + H2O + H(+). Functionally, catalyzes the pyrimidine ring opening between N-3 and C-4 by an unusual flavin hydroperoxide-catalyzed mechanism, adding oxygen atoms in the process to yield ureidoacrylate peracid, that immediately reacts with FMN forming ureidoacrylate and FMN-N(5)-oxide. The FMN-N(5)-oxide reacts spontaneously with NADH to produce FMN. Requires the flavin reductase RutF to regenerate FMN in vivo. The protein is Pyrimidine monooxygenase RutA of Cronobacter turicensis (strain DSM 18703 / CCUG 55852 / LMG 23827 / z3032).